The following is a 353-amino-acid chain: Sphingosine 1-phosphate receptor 2 (353 aa).

At 1–34 (MGSLYSEYLNPNKVQEHYNYTKETLETQETTSRQ) the chain is on the extracellular side. The N-linked (GlcNAc...) asparagine glycan is linked to Asn-19. The chain crosses the membrane as a helical span at residues 35–59 (VASAFIVILCCAIVVENLLVLIAVA). Over 60–66 (RNSKFHS) the chain is Cytoplasmic. Residues 67 to 95 (AMYLFLGNLAASDLLAGVAFVANTLLSGS) traverse the membrane as a helical segment. The Extracellular segment spans residues 96–109 (VTLRLTPVQWFARE). The helical transmembrane segment at 110–128 (GSAFITLSASVFSLLAIAI) threads the bilayer. Residues 129 to 147 (ERHVAIAKVKLYGSDKSCR) are Cytoplasmic-facing. Residues 148-173 (MLLLIGASWLISLVLGGLPILGWNCL) traverse the membrane as a helical segment. The Extracellular portion of the chain corresponds to 174–189 (GHLEACSTVLPLYAKH). Residues 190–210 (YVLCVVTIFSIILLAIVALYV) form a helical membrane-spanning segment. At 211-233 (RIYCVVRSSHADMAAPQTLALLK) the chain is on the cytoplasmic side. A helical membrane pass occupies residues 234–255 (TVTIVLGVFIVCWLPAFSILLL). Over 256–271 (DYACPVHSCPILYKAH) the chain is Extracellular. The chain crosses the membrane as a helical span at residues 272–292 (YFFAVSTLNSLLNPVIYTWRS). Topologically, residues 293 to 353 (RDLRREVLRP…PTFLEGNTVV (61 aa)) are cytoplasmic. Cys-305 is lipidated: S-palmitoyl cysteine.

Belongs to the G-protein coupled receptor 1 family.

It is found in the cell membrane. Functionally, receptor for the lysosphingolipid sphingosine 1-phosphate (S1P). S1P is a bioactive lysophospholipid that elicits diverse physiological effects on most types of cells and tissues. When expressed in rat HTC4 hepatoma cells, is capable of mediating S1P-induced cell proliferation and suppression of apoptosis. Receptor for the chemokine-like protein FAM19A5. Mediates the inhibitory effect of FAM19A5 on vascular smooth muscle cell proliferation and migration. In lymphoid follicles, couples the binding of S1P to the activation of GNA13 and downstream inhibition of AKT activation leading to suppression of germinal center (GC) B cell growth and migration outside the GC niche. The polypeptide is Sphingosine 1-phosphate receptor 2 (S1PR2) (Homo sapiens (Human)).